A 504-amino-acid chain; its full sequence is UDP-GalNAc:beta-1,3-N-acetylgalactosaminyltransferase 2 (504 aa).

Residues 1–3 (MRN) lie on the Cytoplasmic side of the membrane. A helical; Signal-anchor for type II membrane protein transmembrane segment spans residues 4–24 (WLVLLCPCVLGAALHLWHLWL). The Lumenal segment spans residues 25-504 (RSPPDPHNTG…DPCQCEAKVR (480 aa)). Asn117 and Asn176 each carry an N-linked (GlcNAc...) asparagine glycan.

The protein belongs to the glycosyltransferase 31 family. In terms of processing, N-glycosylated. In terms of tissue distribution, present in testis (at protein level). In testis, it is mainly detected in the middle layers of seminiferous tubules at stages XII to II. Strongly expressed in primary and secondary spermatocytes and early round spermatids, but not in spermatogonia, elongating or elongated spermatids, or in Leydig or Sertoli cells.

It is found in the golgi apparatus membrane. The protein localises to the endoplasmic reticulum. The catalysed reaction is 3-O-(N-acetyl-beta-D-glucosaminyl-(1-&gt;4)-alpha-D-mannosyl)-L-threonyl-[protein] + UDP-N-acetyl-alpha-D-galactosamine = 3-O-[beta-D-GalNAc-(1-&gt;3)-beta-D-GlcNAc-(1-&gt;4)-alpha-D-Man]-L-Thr-[protein] + UDP + H(+). It functions in the pathway protein modification; protein glycosylation. Functionally, beta-1,3-N-acetylgalactosaminyltransferase that synthesizes a unique carbohydrate structure, GalNAc-beta-1-3GlcNAc, on N- and O-glycans. Has no galactose nor galactosaminyl transferase activity toward any acceptor substrate. Involved in alpha-dystroglycan (DAG1) glycosylation: acts coordinately with GTDC2/POMGnT2 to synthesize a GalNAc-beta3-GlcNAc-beta-terminus at the 4-position of protein O-mannose in the biosynthesis of the phosphorylated O-mannosyl trisaccharide (N-acetylgalactosamine-beta-3-N-acetylglucosamine-beta-4-(phosphate-6-)mannose), a carbohydrate structure present in alpha-dystroglycan, which is required for binding laminin G-like domain-containing extracellular proteins with high affinity. The chain is UDP-GalNAc:beta-1,3-N-acetylgalactosaminyltransferase 2 (B3galnt2) from Mus musculus (Mouse).